Reading from the N-terminus, the 1050-residue chain is Transcription intermediary factor 1-alpha (1050 aa).

A Glycyl lysine isopeptide (Lys-Gly) (interchain with G-Cter in SUMO2) cross-link involves residue lysine 7. Residues 15-30 (ASAAASGGPSAAPSGE) show a composition bias toward low complexity. The disordered stretch occupies residues 15–44 (ASAAASGGPSAAPSGENEAESRQGPDSERG). Basic and acidic residues predominate over residues 33-44 (AESRQGPDSERG). The segment at 56-82 (CAVCHQNIQSRAPKLLPCLHSFCQRCL) adopts an RING-type zinc-finger fold. At threonine 101 the chain carries Phosphothreonine. Residue serine 110 is modified to Phosphoserine. 2 B box-type zinc fingers span residues 158 to 211 (KSNQ…VSPE) and 218 to 259 (QRPV…YQFI). Positions 163, 166, 187, and 200 each coordinate Zn(2+). Lysine 205 is covalently cross-linked (Glycyl lysine isopeptide (Lys-Gly) (interchain with G-Cter in SUMO2)). 4 residues coordinate Zn(2+): cysteine 223, histidine 226, cysteine 246, and histidine 251. Lysine 276 is covalently cross-linked (Glycyl lysine isopeptide (Lys-Gly) (interchain with G-Cter in SUMO2)). Residues 289 to 359 (NQIQNRIIEV…AGLSKQLEHV (71 aa)) are a coiled coil. Residues 429-456 (ESQPQMPKQNPVVEQNSQPPSGLSSNQL) form a disordered region. The segment covering 431-456 (QPQMPKQNPVVEQNSQPPSGLSSNQL) has biased composition (polar residues). Residues lysine 436 and lysine 458 each participate in a glycyl lysine isopeptide (Lys-Gly) (interchain with G-Cter in SUMO2) cross-link. The residue at position 469 (arginine 469) is an Omega-N-methylarginine. Composition is skewed to low complexity over residues 476 to 490 (QVMAQRQQVQRRPAP) and 499 to 510 (QGPIQQPSISHQ). The interval 476–550 (QVMAQRQQVQ…PPNQNIPRQA (75 aa)) is disordered. Pro residues predominate over residues 526–535 (PNGPVLPPHP). Residue lysine 552 forms a Glycyl lysine isopeptide (Lys-Gly) (interchain with G-Cter in SUMO2) linkage. The interval 571-594 (ISSGQGTPSTTNSTSSTPSSPTIT) is disordered. Residues 577 to 594 (TPSTTNSTSSTPSSPTIT) are compositionally biased toward low complexity. Residue lysine 641 forms a Glycyl lysine isopeptide (Lys-Gly) (interchain with G-Cter in SUMO2) linkage. The tract at residues 643-712 (TNIDHGQPRP…PAGADSTHKV (70 aa)) is disordered. 3 positions are modified to phosphoserine: serine 654, serine 660, and serine 667. Polar residues predominate over residues 654-666 (SNRTVQSPNSSVP). The segment covering 685-707 (SPSASSVGSRGSSGSSSKPAGAD) has biased composition (low complexity). Glycyl lysine isopeptide (Lys-Gly) (interchain with G-Cter in SUMO2) cross-links involve residues lysine 702 and lysine 711. A Glycyl lysine isopeptide (Lys-Gly) (interchain with G-Cter in SUMO1); alternate cross-link involves residue lysine 723. A Glycyl lysine isopeptide (Lys-Gly) (interchain with G-Cter in SUMO2); alternate cross-link involves residue lysine 723. Residue lysine 741 forms a Glycyl lysine isopeptide (Lys-Gly) (interchain with G-Cter in SUMO2) linkage. Serine 744 carries the post-translational modification Phosphoserine. The segment at 754–779 (NYPRSILTSLLLNSSQSSTSEETVLR) is nuclear receptor binding site (NRBS). The tract at residues 766-824 (NSSQSSTSEETVLRSDAPDSTGDQPGLHQDNSSNGKSEWLDPSQKSPLHVGETRKEDDP) is disordered. Phosphoserine; by ATM is present on serine 768. Lysine 801 is covalently cross-linked (Glycyl lysine isopeptide (Lys-Gly) (interchain with G-Cter in SUMO2)). Serine 808 is modified (phosphoserine). Residue lysine 810 forms a Glycyl lysine isopeptide (Lys-Gly) (interchain with G-Cter in SUMO2) linkage. Serine 811 carries the phosphoserine modification. Phosphothreonine is present on threonine 818. The PHD-type zinc-finger motif lies at 826 to 873 (EDWCAVCQNGGELLCCEKCPKVFHLSCHVPTLTNFPSGEWICTFCRDL). Positions 834–840 (NGGELLC) are interaction with histone H3 that is not methylated at 'Lys-4' (H3K4me0). Lysine 875 is covalently cross-linked (Glycyl lysine isopeptide (Lys-Gly) (interchain with G-Cter in SUMO2)). Positions 891–907 (KKKTEGLVKLTPIDKRK) match the Nuclear localization signal motif. One can recognise a Bromo domain in the interval 899-1004 (KLTPIDKRKC…NYFEELLKNL (106 aa)). Lysine 949 is covalently cross-linked (Glycyl lysine isopeptide (Lys-Gly) (interchain with G-Cter in SUMO2)). The segment at 979–980 (FN) is interaction with histone H3 that is acetylated at 'Lys-23' (H3K23ac). Lysine 992 participates in a covalent cross-link: Glycyl lysine isopeptide (Lys-Gly) (interchain with G-Cter in SUMO2). The segment covering 1011-1026 (PKPEFRNESEDNKFSD) has biased composition (basic and acidic residues). A disordered region spans residues 1011 to 1036 (PKPEFRNESEDNKFSDDSDDDFVQPR). Residues serine 1019, serine 1025, and serine 1028 each carry the phosphoserine modification. Lysine 1041 participates in a covalent cross-link: Glycyl lysine isopeptide (Lys-Gly) (interchain with G-Cter in SUMO2). Serine 1042 carries the post-translational modification Phosphoserine.

As to quaternary structure, interacts with CARM1, NCOA2/GRIP1, PML, KAT5/TIP60, BRD7, CBX1, CBX3 and CBX5. Part of a coactivator complex containing TRIM24, NCOA2 and CARM1. Interacts with NR3C2/MCR. Interacts with the ligand-binding domain of estrogen receptors (in vitro). Interaction with DNA-bound estrogen receptors requires the presence of estradiol. Interacts with AR and p53/TP53. Interacts (via bromo domain) with histone H3 (via N-terminus), provided that it is not methylated at 'Lys-4' (H3K4me0). Does not interact with histone H3 that is methylated at 'Lys-4' (H3K4me1, H3K4me2 or H3K4me3). Interacts (via bromo domain) with histone H3 (via N-terminus) that is acetylated at 'Lys-23' (H3K23ac). Has the highest affinity for histone H3 that is both unmodified at 'Lys-4' (H3K4me0) and acetylated at 'Lys-23' (H3K23ac). Has very low affinity for histone H3 that is methylated at 'Lys-9' (H3K9me), or acetylated at both 'Lys-9' (H3K9ac) and 'Lys-14' (H3K14ac), or acetylated at 'Lys-27' (H3K27ac) (in vitro). Interacts with TRIM16. Phosphorylated at Ser-768 by ATM kinase induces ubiquitination and degradation during DNA damage. Post-translationally, sumoylated. In terms of processing, undergoes ubiquitination-mediated degradation in response to DNA damage.

The protein localises to the nucleus. The protein resides in the cytoplasm. Its subcellular location is the mitochondrion. The catalysed reaction is S-ubiquitinyl-[E2 ubiquitin-conjugating enzyme]-L-cysteine + [acceptor protein]-L-lysine = [E2 ubiquitin-conjugating enzyme]-L-cysteine + N(6)-ubiquitinyl-[acceptor protein]-L-lysine.. Its pathway is protein modification; protein ubiquitination. Transcriptional coactivator that interacts with numerous nuclear receptors and coactivators and modulates the transcription of target genes. Interacts with chromatin depending on histone H3 modifications, having the highest affinity for histone H3 that is both unmodified at 'Lys-4' (H3K4me0) and acetylated at 'Lys-23' (H3K23ac). Has E3 protein-ubiquitin ligase activity. During the DNA damage response, participates in an autoregulatory feedback loop with TP53. Early in response to DNA damage, ATM kinase phosphorylates TRIM24 leading to its ubiquitination and degradation. After sufficient DNA repair has occurred, TP53 activates TRIM24 transcription, ultimately leading to TRIM24-mediated TP53 ubiquitination and degradation. Plays a role in the regulation of cell proliferation and apoptosis, at least in part via its effects on p53/TP53 levels. Up-regulates ligand-dependent transcription activation by AR, GCR/NR3C1, thyroid hormone receptor (TR) and ESR1. Modulates transcription activation by retinoic acid (RA) receptors, including RARA. Plays a role in regulating retinoic acid-dependent proliferation of hepatocytes. Also participates in innate immunity by mediating the specific 'Lys-63'-linked ubiquitination of TRAF3 leading to activation of downstream signal transduction of the type I IFN pathway. Additionally, negatively regulates NLRP3/CASP1/IL-1beta-mediated pyroptosis and cell migration probably by ubiquitinating NLRP3. The sequence is that of Transcription intermediary factor 1-alpha (TRIM24) from Homo sapiens (Human).